A 215-amino-acid chain; its full sequence is Probable transaldolase (215 aa).

Lys-83 functions as the Schiff-base intermediate with substrate in the catalytic mechanism.

This sequence belongs to the transaldolase family. Type 3B subfamily.

The protein resides in the cytoplasm. It carries out the reaction D-sedoheptulose 7-phosphate + D-glyceraldehyde 3-phosphate = D-erythrose 4-phosphate + beta-D-fructose 6-phosphate. Its pathway is carbohydrate degradation; pentose phosphate pathway; D-glyceraldehyde 3-phosphate and beta-D-fructose 6-phosphate from D-ribose 5-phosphate and D-xylulose 5-phosphate (non-oxidative stage): step 2/3. Functionally, transaldolase is important for the balance of metabolites in the pentose-phosphate pathway. In Methanococcus maripaludis (strain C6 / ATCC BAA-1332), this protein is Probable transaldolase.